A 359-amino-acid chain; its full sequence is RNA-binding protein 4B (359 aa).

2 consecutive RRM domains span residues 2–72 (VKLF…ASKN) and 78–148 (TKLH…LSTS). Residues 160-177 (SGCYRCGKEGHWSKECPV) form a CCHC-type zinc finger. The interaction with TNPO3 stretch occupies residues 196 to 359 (AVRPPYTMGY…YVDRARYSAF (164 aa)).

As to quaternary structure, interacts with TNPO3, which may mediate nuclear import of the protein.

The protein resides in the nucleus. It localises to the nucleolus. In terms of biological role, required for the translational activation of PER1 mRNA in response to circadian clock. Binds directly to the 3'-UTR of the PER1 mRNA. The chain is RNA-binding protein 4B (RBM4B) from Sus scrofa (Pig).